The following is a 495-amino-acid chain: Formin-like protein 17 (495 aa).

Residues 1 to 92 (MDIRELIDIT…HNLKGQGQTR (92 aa)) are disordered. Over residues 19–29 (GPPPPPPPPLL) the composition is skewed to pro residues. Over residues 30-39 (QPHHSALSSS) the composition is skewed to low complexity. In terms of domain architecture, FH2 spans 86 to 486 (KGQGQTRKAN…RAQKEAENEK (401 aa)).

The protein belongs to the formin-like family. Class-II subfamily.

The polypeptide is Formin-like protein 17 (FH17) (Arabidopsis thaliana (Mouse-ear cress)).